The following is a 242-amino-acid chain: Phosphoribosylaminoimidazole-succinocarboxamide synthase (242 aa).

It belongs to the SAICAR synthetase family.

It carries out the reaction 5-amino-1-(5-phospho-D-ribosyl)imidazole-4-carboxylate + L-aspartate + ATP = (2S)-2-[5-amino-1-(5-phospho-beta-D-ribosyl)imidazole-4-carboxamido]succinate + ADP + phosphate + 2 H(+). It participates in purine metabolism; IMP biosynthesis via de novo pathway; 5-amino-1-(5-phospho-D-ribosyl)imidazole-4-carboxamide from 5-amino-1-(5-phospho-D-ribosyl)imidazole-4-carboxylate: step 1/2. This chain is Phosphoribosylaminoimidazole-succinocarboxamide synthase, found in Trichodesmium erythraeum (strain IMS101).